We begin with the raw amino-acid sequence, 244 residues long: Tabinhibitin 8 (244 aa).

A signal peptide spans 1 to 23 (MTSILVSRFKISALTLQYATSDS). The SCP domain maps to 67–194 (YTGGGIIVLR…KTPLFFSSNC (128 aa)). The Cell attachment site signature appears at 143 to 145 (RGD).

Belongs to the CRISP family. Expressed in salivary glands.

It localises to the secreted. In terms of biological role, inhibits platelet aggregation induced by all agonists tested (ADP, arachidonic acid, the thromboxane A2 analog U46619, thrombin, and snake venom snaclecs (TMVA that activates platelet through GPIB, and stejnulxin that specifically acts through GPVI (GP6))). May act by competing with fibrinogen for binding to glycoprotein IIb/IIIa (ITGA2B/ITGB3). This Tabanus yao (Horsefly) protein is Tabinhibitin 8.